A 466-amino-acid polypeptide reads, in one-letter code: Acetyl-coenzyme A carboxylase carboxyl transferase subunit beta, chloroplastic (466 aa).

In terms of domain architecture, CoA carboxyltransferase N-terminal spans 198 to 466; the sequence is LWIQCENCYE…FPLNQNSIGQ (269 aa). Residues C202, C205, C221, and C224 each coordinate Zn(2+). Residues 202-224 form a C4-type zinc finger; it reads CENCYELNYKKLLKSKMRICDEC.

This sequence belongs to the AccD/PCCB family. Acetyl-CoA carboxylase is a heterohexamer composed of biotin carboxyl carrier protein, biotin carboxylase and 2 subunits each of ACCase subunit alpha and ACCase plastid-coded subunit beta (accD). Requires Zn(2+) as cofactor.

The protein resides in the plastid. It is found in the chloroplast stroma. The catalysed reaction is N(6)-carboxybiotinyl-L-lysyl-[protein] + acetyl-CoA = N(6)-biotinyl-L-lysyl-[protein] + malonyl-CoA. It participates in lipid metabolism; malonyl-CoA biosynthesis; malonyl-CoA from acetyl-CoA: step 1/1. Its function is as follows. Component of the acetyl coenzyme A carboxylase (ACC) complex. Biotin carboxylase (BC) catalyzes the carboxylation of biotin on its carrier protein (BCCP) and then the CO(2) group is transferred by the transcarboxylase to acetyl-CoA to form malonyl-CoA. In Fagopyrum esculentum subsp. ancestrale (Wild buckwheat), this protein is Acetyl-coenzyme A carboxylase carboxyl transferase subunit beta, chloroplastic.